Here is a 430-residue protein sequence, read N- to C-terminus: Arrestin-related trafficking adapter 10 (430 aa).

Residues 55–75 (AEADRHSSRLPQDPQTQYTKE) are disordered. A compositionally biased stretch (polar residues) spans 63 to 72 (RLPQDPQTQY).

This sequence belongs to the ART10 family.

Its subcellular location is the cytoplasm. Its function is as follows. May regulate endocytosis by recruiting RSP5 ubiquitin ligase activity to specific plasma membrane proteins in response to extracellular stimuli. The polypeptide is Arrestin-related trafficking adapter 10 (ART10) (Eremothecium gossypii (strain ATCC 10895 / CBS 109.51 / FGSC 9923 / NRRL Y-1056) (Yeast)).